The primary structure comprises 210 residues: MLELFDVSYEELQTTRSEELYKLRKKTFSDRLGWEVICSQGMESDEFDGPGTRYILGICEGQLVCSVRFTSLDRPNMITHTFQHCFSDVTLPAYGTESSRFFVDKARARALLGEHYPISQVLFLAMVNWAQNNAYGNIYTIVSRAMLKILTRSGWQIKVIKEAFLTEKERIYLLTLPAGQDDKQQLGGDVVSRTGCPPVAVTTWPLTLPV.

It belongs to the autoinducer synthase family.

It catalyses the reaction a fatty acyl-[ACP] + S-adenosyl-L-methionine = an N-acyl-L-homoserine lactone + S-methyl-5'-thioadenosine + holo-[ACP] + H(+). Functionally, required for the synthesis of OHHL (N-(3-oxohexanoyl)-L-homoserine lactone), an autoinducer molecule which binds to EsaR. OHHL is necessary for biosynthesis of EPS virulence factor (extracellular heteropolysaccharide) which plays a role in the development of Stewart's wilt on sweet corn. In Pantoea stewartii subsp. stewartii (Erwinia stewartii), this protein is Acyl-homoserine-lactone synthase (esaI).